A 178-amino-acid polypeptide reads, in one-letter code: Caveolin-1 (178 aa).

At Ser2 the chain carries N-acetylserine. Ser2 is subject to Phosphoserine. Positions 2–94 are required for homooligomerization; the sequence is SGGKYVDSEG…WKASFTTFTV (93 aa). Residues 2 to 104 lie on the Cytoplasmic side of the membrane; that stretch reads SGGKYVDSEG…TKYWFYRLLS (103 aa). Position 5 is an N6-acetyllysine; alternate (Lys5). Lys5 is covalently cross-linked (Glycyl lysine isopeptide (Lys-Gly) (interchain with G-Cter in ubiquitin); alternate). The residue at position 6 (Tyr6) is a Phosphotyrosine. Residue Ser9 is modified to Phosphoserine. Tyr14 is modified (phosphotyrosine; by ABL1). Tyr25 is subject to Phosphotyrosine. Residues Lys26, Lys30, Lys39, Lys47, and Lys57 each participate in a glycyl lysine isopeptide (Lys-Gly) (interchain with G-Cter in ubiquitin) cross-link. Residues 82-94 form an interaction with CAVIN3 region; the sequence is DGIWKASFTTFTV. An intramembrane region (helical) is located at residues 105–125; it reads SLVGIPVALIWGIYFAILSFL. Residues 126-178 lie on the Cytoplasmic side of the membrane; it reads YIWAVVPCIKSFLIKIQCISRIYSICIHTFCDPLYEAIGKIFSNIRISMQKEI. The tract at residues 131–142 is interacts with SPRY1, SPRY2, SPRY3 and SPRY4; the sequence is VPCIKSFLIKIQ. 3 S-palmitoyl cysteine lipidation sites follow: Cys133, Cys143, and Cys156. The tract at residues 149-160 is interacts with SPRY1, SPRY2, and SPRY4; it reads SICIHTFCDPLY. Positions 167 to 178 are interacts with SPRY1, SPRY2, SPRY3 and SPRY4; that stretch reads FSNIRISMQKEI.

Belongs to the caveolin family. As to quaternary structure, homooligomer. Interacts with GLIPR2. Interacts with NOSTRIN. Interacts with SNAP25 and STX1A. Interacts (via the N-terminus) with DPP4; the interaction is direct. Interacts with CTNNB1, CDH1 and JUP. Interacts with PACSIN2; this interaction induces membrane tubulation. Interacts with SLC7A9. Interacts with BMX and BTK. Interacts with TGFBR1. Interacts with CAVIN3 (via leucine-zipper domain) in a cholesterol-sensitive manner. Interacts with CAVIN1. Interacts with EHD2 in a cholesterol-dependent manner. Forms a ternary complex with UBXN6 and VCP; mediates CAV1 targeting to lysosomes for degradation. Interacts with ABCG1; this interaction regulates ABCG1-mediated cholesterol efflux. Interacts with NEU3; this interaction enhances NEU3 sialidase activity within caveola. Interacts (via C-terminus) with SPRY1, SPRY2 (via C-terminus), SPRY3, and SPRY4. Interacts with IGFBP5; this interaction allows trafficking of IGFBP5 from the plasma membrane to the nucleus. Post-translationally, phosphorylated at Tyr-14 by ABL1 in response to oxidative stress. Ubiquitinated. Undergo monoubiquitination and multi- and/or polyubiquitination. Monoubiquitination of N-terminal lysines promotes integration in a ternary complex with UBXN6 and VCP which promotes oligomeric CAV1 targeting to lysosomes for degradation. Ubiquitinated by ZNRF1; leading to degradation and modulation of the TLR4-mediated immune response.

It localises to the golgi apparatus membrane. The protein resides in the cell membrane. Its subcellular location is the membrane. It is found in the caveola. The protein localises to the membrane raft. May act as a scaffolding protein within caveolar membranes. Forms a stable heterooligomeric complex with CAV2 that targets to lipid rafts and drives caveolae formation. Mediates the recruitment of CAVIN proteins (CAVIN1/2/3/4) to the caveolae. Interacts directly with G-protein alpha subunits and can functionally regulate their activity. Involved in the costimulatory signal essential for T-cell receptor (TCR)-mediated T-cell activation. Its binding to DPP4 induces T-cell proliferation and NF-kappa-B activation in a T-cell receptor/CD3-dependent manner. Recruits CTNNB1 to caveolar membranes and may regulate CTNNB1-mediated signaling through the Wnt pathway. Negatively regulates TGFB1-mediated activation of SMAD2/3 by mediating the internalization of TGFBR1 from membrane rafts leading to its subsequent degradation. Binds 20(S)-hydroxycholesterol (20(S)-OHC). This Atelerix albiventris (Middle-African hedgehog) protein is Caveolin-1 (CAV1).